A 215-amino-acid chain; its full sequence is MKYQLTVMEARVIGCLLEKQVTTPEQYPLSVNGVVTACNQKTNREPVMNLSESEVQEQLDNLVKRHYLRTVSGFGNRVTKYEQRFCNSEFGDLKLSAAEVALITTLLLRGAQTPGELRSRAARMYEFSDMAEVESTLEQLANREDGPFVVRLAREPGKRESRYMHLFSGEVENPPAVTDMSNAADGDLQARVEALEIEVAELKQRLDSLLAHLGD.

Lys-80 carries the N6-acetyllysine modification.

Belongs to the UPF0502 family.

This is UPF0502 protein YceH from Escherichia coli O81 (strain ED1a).